We begin with the raw amino-acid sequence, 300 residues long: MEPPMEPSGGEQEPGAVRLLDLPWEDVLLPHILSRVPLRQLLRLQRVSRAFRALVQLHLAGLRRFDAAQVGPQIPRAALAWLLRDAEGLQELALAPCHEWLSDEDLVPVLTRNPQLRSVALAGCGQLSRRALGALAEGCPRLQRLSLAHCDWVDGLALRGLADRCPALEELDLTACRQLKDEAIVYLAQRRGAGLRSLSLAVNANVGDAAVQELARNCPELEHLDLTGCLRVGSDGVRTLAEYCPALRSLRVRHCHHVAEPSLSRLRKRGVDIDVEPPLHQALVLLQDMAGFAPFVNLQV.

Met-1 carries the post-translational modification N-acetylmethionine. One can recognise an F-box domain in the interval 19–66 (LLDLPWEDVLLPHILSRVPLRQLLRLQRVSRAFRALVQLHLAGLRRFD). Positions 113-269 (NPQLRSVALA…EPSLSRLRKR (157 aa)) are interaction with SMURF1. LRR repeat units follow at residues 141-162 (RLQR…RGLA), 167-188 (ALEE…VYLA), 194-215 (GLRS…QELA), 220-241 (ELEH…RTLA), and 246-267 (ALRS…SRLR).

The protein belongs to the FBXL15 family. As to quaternary structure, part of the SCF (SKP1-CUL1-F-box) E3 ubiquitin-protein ligase complex SCF(FBXL15) composed of CUL1, SKP1, RBX1 and FBXL15.

The protein localises to the cytoplasm. It functions in the pathway protein modification; protein ubiquitination. Functionally, substrate recognition component of a SCF (SKP1-CUL1-F-box protein) E3 ubiquitin-protein ligase complex which mediates the ubiquitination and subsequent proteasomal degradation of SMURF1, thereby acting as a positive regulator of the BMP signaling pathway. Required for dorsal/ventral pattern formation and bone mass maintenance. Also mediates ubiquitination of SMURF2 and WWP2. In Canis lupus familiaris (Dog), this protein is F-box/LRR-repeat protein 15 (FBXL15).